The chain runs to 271 residues: Large ribosomal subunit protein uL2cz/uL2cy (271 aa).

Disordered stretches follow at residues 1–22 (MAKHLYKTPIPSTRKGTVDRQV) and 223–271 (PVDH…RRRK).

Belongs to the universal ribosomal protein uL2 family. As to quaternary structure, part of the 50S ribosomal subunit.

Its subcellular location is the plastid. It is found in the chloroplast. This Sorghum bicolor (Sorghum) protein is Large ribosomal subunit protein uL2cz/uL2cy (rpl2-A).